The primary structure comprises 203 residues: Large ribosomal subunit protein bL25 (203 aa).

It belongs to the bacterial ribosomal protein bL25 family. CTC subfamily. As to quaternary structure, part of the 50S ribosomal subunit; part of the 5S rRNA/L5/L18/L25 subcomplex. Contacts the 5S rRNA. Binds to the 5S rRNA independently of L5 and L18.

In terms of biological role, this is one of the proteins that binds to the 5S RNA in the ribosome where it forms part of the central protuberance. The chain is Large ribosomal subunit protein bL25 from Rickettsia conorii (strain ATCC VR-613 / Malish 7).